The following is a 560-amino-acid chain: OTU domain-containing protein 5-A (560 aa).

2 disordered regions span residues 1–100 (MTIL…MACV) and 141–190 (GGGT…QSED). Residues 17 to 32 (DHPDDPDRRTGSDPHQ) show a composition bias toward basic and acidic residues. A compositionally biased stretch (gly residues) spans 141-163 (GGGTGPGAAGGGGGGGGGGGVGG). One can recognise an OTU domain in the interval 211 to 334 (FVIKKMKEDG…NIHYNSVVNP (124 aa)). The interval 216–222 (MKEDGAC) is cys-loop. Residue D219 is part of the active site. The Nucleophile role is filled by C222. Residues 271-281 (KRKNNCHGNHI) form a variable-loop region. Residues 322-327 (YHRNIH) are his-loop. H327 is an active-site residue. The interval 411 to 496 (ARQPRKASAT…ACVGPDRPTS (86 aa)) is disordered. 2 stretches are compositionally biased toward low complexity: residues 417–430 (ASAT…AASS) and 437–448 (ARSPRQRSSAPS).

The protein belongs to the peptidase C85 family.

It carries out the reaction Thiol-dependent hydrolysis of ester, thioester, amide, peptide and isopeptide bonds formed by the C-terminal Gly of ubiquitin (a 76-residue protein attached to proteins as an intracellular targeting signal).. Its function is as follows. Deubiquitinating enzyme that may function as negative regulator of the innate immune system. Has peptidase activity towards 'Lys-48'- and 'Lys-63'-linked polyubiquitin chains. Can also cleave 'Lys-11'-linked ubiquitin chains (in vitro). This chain is OTU domain-containing protein 5-A (otud5a), found in Danio rerio (Zebrafish).